We begin with the raw amino-acid sequence, 364 residues long: DNA polymerase IV (364 aa).

The UmuC domain occupies 14-198 (IIHIDMDAFF…LPIEKFHGVG (185 aa)). Mg(2+) is bound by residues Asp18 and Asp116. Glu117 is a catalytic residue.

Belongs to the DNA polymerase type-Y family. As to quaternary structure, monomer. Mg(2+) serves as cofactor.

Its subcellular location is the cytoplasm. The catalysed reaction is DNA(n) + a 2'-deoxyribonucleoside 5'-triphosphate = DNA(n+1) + diphosphate. Functionally, poorly processive, error-prone DNA polymerase involved in untargeted mutagenesis. Copies undamaged DNA at stalled replication forks, which arise in vivo from mismatched or misaligned primer ends. These misaligned primers can be extended by PolIV. Exhibits no 3'-5' exonuclease (proofreading) activity. May be involved in translesional synthesis, in conjunction with the beta clamp from PolIII. The polypeptide is DNA polymerase IV (Streptococcus pyogenes serotype M12 (strain MGAS2096)).